A 416-amino-acid polypeptide reads, in one-letter code: 3-oxoacyl-[acyl-carrier-protein] synthase 1 (416 aa).

Positions 11–415 (FPSVVVTAVT…GHNVALAFGR (405 aa)) constitute a Ketosynthase family 3 (KS3) domain. Residues cysteine 171, histidine 311, and histidine 345 each act as for beta-ketoacyl synthase activity in the active site. Substrate-binding residues include histidine 311 and histidine 345.

This sequence belongs to the thiolase-like superfamily. Beta-ketoacyl-ACP synthases family.

It localises to the cytoplasm. It catalyses the reaction an ultra-long-chain mono-unsaturated fatty acyl-[ACP] + malonyl-[ACP] + H(+) = a 3-oxo-ultra-long-chain mono-unsaturated fatty acyl-[ACP] + holo-[ACP] + CO2. It participates in lipid metabolism; mycolic acid biosynthesis. Functionally, part of the mycobacterial fatty acid elongation system FAS-II, which is involved in mycolic acid biosynthesis. Catalyzes the elongation of long chain acyl-ACP substrates by the addition of two carbons from malonyl-ACP to an acyl acceptor. Involved in the initial extension of the mycolate chain and forms monounsaturated fatty acids that averaged 40 carbons in length. This is 3-oxoacyl-[acyl-carrier-protein] synthase 1 (kasA) from Mycobacterium leprae (strain TN).